Here is a 249-residue protein sequence, read N- to C-terminus: O-methyltransferase adaD (249 aa).

Low complexity predominate over residues 1–15 (MSSVTLTTTTTTTST). The interval 1 to 26 (MSSVTLTTTTTTTSTPPKPTPKDEPQ) is disordered.

This sequence belongs to the methyltransferase superfamily.

It catalyses the reaction 2-acetyl-3,4a,8,10,11,12a-hexahydroxy-1,4,4a,5,12,12a-hexahydrotetracene-1,12-dione + S-adenosyl-L-methionine = TAN-1612 + S-adenosyl-L-homocysteine + H(+). The protein operates within secondary metabolite biosynthesis. In terms of biological role, O-methyltransferase; part of the gene cluster that mediates the biosynthesis of the linear tetracyclic TAN-1612 neuropeptide Y receptor antagonist. The decaketide backbone of TAN-1612 is synthesized by the non-reducing polyketide synthase adaA via condensation of one acetyl-CoA starter unit with 9 malonyl-CoA units. The FAD-dependent monooxygenase adaC then performs hydroxylation at C2 while the polaketide chain is still attached to the NRPKS adaA. The alpha-hydroxylation step at C2 appears to be crucial for the following C18-C1 Claisen cyclization and release of the C9-hydroxyl version of TAN-1612 from the NRPKS adaA, two steps performed by the lactamase-like protein adaB. Finally, the O-methyltransferase adaD performs the C9 O-methylation to complete the biosynthesis of TAN-1612. The sequence is that of O-methyltransferase adaD from Aspergillus niger.